Reading from the N-terminus, the 22-residue chain is Mu-conotoxin GIIIB (22 aa).

3 disulfides stabilise this stretch: Cys3–Cys15, Cys4–Cys20, and Cys10–Cys21. A 4-hydroxyproline; partial mark is found at Pro6 and Pro7. 4-hydroxyproline is present on Pro17. Ala22 is subject to Alanine amide.

Belongs to the conotoxin M superfamily. As to expression, expressed by the venom duct.

It localises to the secreted. Functionally, mu-conotoxins block voltage-gated sodium channels (Nav). This Conus geographus (Geography cone) protein is Mu-conotoxin GIIIB.